We begin with the raw amino-acid sequence, 403 residues long: Tryptophan 2,3-dioxygenase (403 aa).

69 to 73 (FIVIH) contributes to the substrate binding site. Residues 133-135 (PLD) carry the PLD motif; required for enzymatic activity motif. Position 140 (Arg140) interacts with substrate. His327 is a binding site for heme. A substrate-binding site is contributed by Thr341.

It belongs to the tryptophan 2,3-dioxygenase family. As to quaternary structure, homotetramer. Dimer of dimers. It depends on heme as a cofactor. Expressed in body wall muscle cells, hypodermis, PLM neurons and touch-receptor neurons.

The enzyme catalyses L-tryptophan + O2 = N-formyl-L-kynurenine. The protein operates within amino-acid degradation; L-tryptophan degradation via kynurenine pathway; L-kynurenine from L-tryptophan: step 1/2. In terms of biological role, heme-dependent dioxygenase that catalyzes the oxidative cleavage of the L-tryptophan (L-Trp) pyrrole ring and converts L-tryptophan to N-formyl-L-kynurenine. Catalyzes the oxidative cleavage of the indole moiety. Involved in regulation of protein homeostasis, longevity and reproducive life span. Specifically regulates proteotoxicity due to age-related aggregation of proteins like alpha-synuclein, via its effects on tryptophan metabolism. The sequence is that of Tryptophan 2,3-dioxygenase from Caenorhabditis elegans.